Here is a 209-residue protein sequence, read N- to C-terminus: GTP-binding protein RHB1 (209 aa).

M1 carries the N-acetylmethionine modification. Residues G28, K29, T30, T31, V42, Y45, T48, D132, and A172 each coordinate GTP. T30 contacts Mg(2+). The Effector region signature appears at 45 to 53; the sequence is YYPTIENEF. Residue T48 participates in Mg(2+) binding. Position 206 is a cysteine methyl ester (C206). A lipid anchor (S-farnesyl cysteine) is attached at C206. Residues 207 to 209 constitute a propeptide, removed in mature form; that stretch reads SIM.

Belongs to the small GTPase superfamily. Rheb family. As to quaternary structure, interacts with BTN2.

The protein localises to the cell membrane. It carries out the reaction GTP + H2O = GDP + phosphate + H(+). In terms of biological role, binds GTP and exhibits intrinsic GTPase activity. Involved in the regulation of arginine and lysine uptake. Acts through the CAN1 permease. The chain is GTP-binding protein RHB1 (RHB1) from Saccharomyces cerevisiae (strain ATCC 204508 / S288c) (Baker's yeast).